The sequence spans 269 residues: Formamidopyrimidine-DNA glycosylase (269 aa).

Pro-2 functions as the Schiff-base intermediate with DNA in the catalytic mechanism. The Proton donor role is filled by Glu-3. The active-site Proton donor; for beta-elimination activity is Lys-57. The DNA site is built by His-90, Arg-109, and Lys-150. The FPG-type zinc finger occupies 235 to 269 (FVYGRAGEPCRICGEQIESIKLGQRSTFFCRHCQY). Arg-259 (proton donor; for delta-elimination activity) is an active-site residue.

It belongs to the FPG family. Monomer. It depends on Zn(2+) as a cofactor.

The enzyme catalyses Hydrolysis of DNA containing ring-opened 7-methylguanine residues, releasing 2,6-diamino-4-hydroxy-5-(N-methyl)formamidopyrimidine.. It carries out the reaction 2'-deoxyribonucleotide-(2'-deoxyribose 5'-phosphate)-2'-deoxyribonucleotide-DNA = a 3'-end 2'-deoxyribonucleotide-(2,3-dehydro-2,3-deoxyribose 5'-phosphate)-DNA + a 5'-end 5'-phospho-2'-deoxyribonucleoside-DNA + H(+). In terms of biological role, involved in base excision repair of DNA damaged by oxidation or by mutagenic agents. Acts as a DNA glycosylase that recognizes and removes damaged bases. Has a preference for oxidized purines, such as 7,8-dihydro-8-oxoguanine (8-oxoG). Has AP (apurinic/apyrimidinic) lyase activity and introduces nicks in the DNA strand. Cleaves the DNA backbone by beta-delta elimination to generate a single-strand break at the site of the removed base with both 3'- and 5'-phosphates. This Photorhabdus laumondii subsp. laumondii (strain DSM 15139 / CIP 105565 / TT01) (Photorhabdus luminescens subsp. laumondii) protein is Formamidopyrimidine-DNA glycosylase.